The sequence spans 212 residues: Pyridoxine/pyridoxamine 5'-phosphate oxidase (212 aa).

Substrate contacts are provided by residues 8 to 11 (RREY) and lysine 66. Residues 61 to 66 (RIVLLK), 76 to 77 (FT), arginine 82, lysine 83, and glutamine 105 contribute to the FMN site. Substrate is bound by residues tyrosine 123, arginine 127, and serine 131. FMN-binding positions include 140–141 (QS) and tryptophan 185. 191–193 (RLH) contacts substrate. Arginine 195 serves as a coordination point for FMN.

This sequence belongs to the pyridoxamine 5'-phosphate oxidase family. Homodimer. FMN is required as a cofactor.

The enzyme catalyses pyridoxamine 5'-phosphate + O2 + H2O = pyridoxal 5'-phosphate + H2O2 + NH4(+). It carries out the reaction pyridoxine 5'-phosphate + O2 = pyridoxal 5'-phosphate + H2O2. It functions in the pathway cofactor metabolism; pyridoxal 5'-phosphate salvage; pyridoxal 5'-phosphate from pyridoxamine 5'-phosphate: step 1/1. The protein operates within cofactor metabolism; pyridoxal 5'-phosphate salvage; pyridoxal 5'-phosphate from pyridoxine 5'-phosphate: step 1/1. Its function is as follows. Catalyzes the oxidation of either pyridoxine 5'-phosphate (PNP) or pyridoxamine 5'-phosphate (PMP) into pyridoxal 5'-phosphate (PLP). This Shewanella baltica (strain OS223) protein is Pyridoxine/pyridoxamine 5'-phosphate oxidase.